Here is a 340-residue protein sequence, read N- to C-terminus: NADH-quinone oxidoreductase subunit H (340 aa).

8 consecutive transmembrane segments (helical) span residues 4–24 (TIGI…PLLI), 78–98 (YLFV…WAVI), 113–133 (VLYL…AGWA), 151–171 (VSYE…AGSM), 184–204 (MLHW…ISGI), 244–264 (SMIL…LSPF), 273–293 (IFFI…FLFV), and 316–336 (VLIP…VAHV).

The protein belongs to the complex I subunit 1 family. In terms of assembly, NDH-1 is composed of 14 different subunits. Subunits NuoA, H, J, K, L, M, N constitute the membrane sector of the complex.

The protein resides in the cell inner membrane. It carries out the reaction a quinone + NADH + 5 H(+)(in) = a quinol + NAD(+) + 4 H(+)(out). Its function is as follows. NDH-1 shuttles electrons from NADH, via FMN and iron-sulfur (Fe-S) centers, to quinones in the respiratory chain. The immediate electron acceptor for the enzyme in this species is believed to be ubiquinone. Couples the redox reaction to proton translocation (for every two electrons transferred, four hydrogen ions are translocated across the cytoplasmic membrane), and thus conserves the redox energy in a proton gradient. This subunit may bind ubiquinone. The sequence is that of NADH-quinone oxidoreductase subunit H from Legionella pneumophila subsp. pneumophila (strain Philadelphia 1 / ATCC 33152 / DSM 7513).